A 550-amino-acid polypeptide reads, in one-letter code: CTP synthase (550 aa).

The segment at 1–271 (MTRYIFITGG…DAEVLDVFGM (271 aa)) is amidoligase domain. Ser-13 provides a ligand contact to CTP. Ser-13 lines the UTP pocket. 14–19 (SLGKGL) provides a ligand contact to ATP. Tyr-54 contacts L-glutamine. Asp-71 serves as a coordination point for ATP. Residues Asp-71 and Glu-145 each contribute to the Mg(2+) site. Residues 152–154 (DIE), 192–197 (KTKPTQ), and Lys-228 each bind CTP. Residues 192-197 (KTKPTQ) and Lys-228 contribute to the UTP site. The Glutamine amidotransferase type-1 domain occupies 297–549 (TIAVVGKYTV…IAAAKEQGRL (253 aa)). Residue Gly-361 coordinates L-glutamine. Catalysis depends on Cys-388, which acts as the Nucleophile; for glutamine hydrolysis. L-glutamine-binding positions include 389–392 (FGMQ), Glu-412, and Arg-477. Catalysis depends on residues His-522 and Glu-524.

It belongs to the CTP synthase family. Homotetramer.

It catalyses the reaction UTP + L-glutamine + ATP + H2O = CTP + L-glutamate + ADP + phosphate + 2 H(+). The catalysed reaction is L-glutamine + H2O = L-glutamate + NH4(+). It carries out the reaction UTP + NH4(+) + ATP = CTP + ADP + phosphate + 2 H(+). It functions in the pathway pyrimidine metabolism; CTP biosynthesis via de novo pathway; CTP from UDP: step 2/2. Allosterically activated by GTP, when glutamine is the substrate; GTP has no effect on the reaction when ammonia is the substrate. The allosteric effector GTP functions by stabilizing the protein conformation that binds the tetrahedral intermediate(s) formed during glutamine hydrolysis. Inhibited by the product CTP, via allosteric rather than competitive inhibition. Catalyzes the ATP-dependent amination of UTP to CTP with either L-glutamine or ammonia as the source of nitrogen. Regulates intracellular CTP levels through interactions with the four ribonucleotide triphosphates. This chain is CTP synthase, found in Caulobacter sp. (strain K31).